A 226-amino-acid polypeptide reads, in one-letter code: Clarin-3 (226 aa).

The chain crosses the membrane as a helical span at residues 8–28 (LMFLSGFLTSLGSVVVICSIL). Asn46 and Asn83 each carry an N-linked (GlcNAc...) asparagine glycan. 3 helical membrane passes run 92–112 (VVIILLILSLAASLLSSMFTF), 128–148 (GVYTWNGLSASFVFLTMVLFV), and 181–201 (FWLILLVILLNIVTVVIIIFY).

Belongs to the clarin family.

It localises to the membrane. The protein is Clarin-3 (Clrn3) of Rattus norvegicus (Rat).